Reading from the N-terminus, the 818-residue chain is Protein TOC75-3, chloroplastic (818 aa).

The transit peptide at 1–79 (MAAFSVNGQL…LKNLAKPLAV (79 aa)) directs the protein to the chloroplast. Residues 15–41 (TSSTASTSLSSRRKFLSPSSSRLPRIS) show a composition bias toward low complexity. Residues 15–67 (TSSTASTSLSSRRKFLSPSSSRLPRISTQSPRVPSIKCSKSLPNRDTETSSKD) form a disordered region. Basic and acidic residues predominate over residues 57–67 (PNRDTETSSKD). Residues 80 to 140 (ASVSSAASFF…KLFSPSPAVA (61 aa)) constitute a chloroplast; outer membrane transit peptide. POTRA domains lie at 141–246 (DEEQ…FAES), 247–364 (TWQS…VVEG), and 365–448 (DITQ…LKEL). Residues 141–473 (DEEQSPDWDS…GRGGAPTLAS (333 aa)) lie on the Chloroplast intermembrane side of the membrane. The chain crosses the membrane as a beta stranded span at residues 474 to 482 (FQPGGSVTF). Residues 483–509 (EHRNLQGLNRSLMGSVTTSNFLNPQDD) are Cytoplasmic-facing. Residues 510-518 (LSFKLEYVH) form a beta stranded membrane-spanning segment. Residues 519–562 (PYLDGVYNPRNRTFKTSCFNSRKLSPVFTGGPGVEEVPPIWVDR) are Chloroplast intermembrane-facing. Residues 563 to 570 (AGVKANIT) form a beta stranded membrane-spanning segment. Residues 571 to 578 (ENFTRQSK) lie on the Cytoplasmic side of the membrane. The beta stranded transmembrane segment at 579–586 (FTYGLVME) threads the bilayer. The Chloroplast intermembrane portion of the chain corresponds to 587-693 (EITTRDESSH…VEQGAGKSPP (107 aa)). Residues 694-702 (PVLVLHGHY) form a beta stranded membrane-spanning segment. Residues 703-714 (GGCVGDLPSYDA) are Cytoplasmic-facing. The chain crosses the membrane as a beta stranded span at residues 715-723 (FVLGGPYSV). At 724–785 (RGYNMGELGA…VYRRTGQGSS (62 aa)) the chain is on the chloroplast intermembrane side. A beta stranded membrane pass occupies residues 786-792 (YGAGVKL). At 793-806 (GLVRAEYAVDHNNG) the chain is on the cytoplasmic side. Residues 807–814 (TGALFFRF) traverse the membrane as a beta stranded segment. Residues 815-818 (GERY) are Chloroplast intermembrane-facing.

The protein belongs to the TOC75 family. As to quaternary structure, part of the TOC core complex that includes a protein for the specific recognition of transit peptides surrounded by a ring composed of four proteins forming translocation channels, and four to five GTP-binding proteins providing energy. This core complex can interact with components of the TIC complex to form a larger import complex. Chloroplastic protein precursors such as prSS (precursor of the RuBisCO small subunit) also interact with these complexes. The TOC complex contains a specific subset of polar lipids such as digalactosyldiacylglyceride (DGDG), phosphatidylcholine (PC) and phosphatidylglycerol (PG). TOC75-3 interacts with TOC34/OEP34, TOC159/TOC86, TOC132 and TOC120. Interacts with SP1. Interacts with TIC236. As to expression, mostly expressed in young and actively dividing photosynthetic tissues and, to a lower extent, in old leaves and roots. Particularly low levels in leaves after etiolation.

The protein resides in the plastid. The protein localises to the chloroplast outer membrane. Essential protein. Mediates the insertion of proteins targeted to the outer membrane of chloroplasts. Required for the import of protein precursors into chloroplasts. Forms the voltage-dependent preprotein translocation channels (hydrophilic beta barrel) of the TOC complex in the chloroplastic outer membrane. This chain is Protein TOC75-3, chloroplastic, found in Arabidopsis thaliana (Mouse-ear cress).